The sequence spans 445 residues: MLETSQTIPELVSWAKEREFSLNLPTERLAFLLAIAIYNAERFDGEMVESDLVDIFRHVSNEFEQSKETIATRANNAINELVKQRFLNRFSSEFTESLSIYRLTPLGVGVSDYYIRQREFSALRLSVQLAIVANEIQRASELAEEGTAKQEDEYYWRRNVFAPLKYSVAEIFDSIDLSQRIMDENQQSIKEEIAELLTKDWQAAIASCERLLDETSGNLRELQDTLNAAGDKLQEQLLRIQDCVIGRDDLYFIDQLITDLQAKLDRIISWGQQAIDLWIGYDRHVHKFIRTAIDMDKNRVFSQRLRQSIHNYFDMPWYLWTAQAERLIDLRDEELALRDEDALGELPEELEYEQLSDLHDQIVDYMQNLLIAQRERNQPIDLSLVLKEQLEGYPLARHFDVARIIVDQAVRLGMASADLSGTYPQWQEINNRGAEVQAHVIDEYK.

The leucine-zipper stretch occupies residues 212–240; the sequence is LDETSGNLRELQDTLNAAGDKLQEQLLRI.

It belongs to the MukF family. In terms of assembly, interacts, and probably forms a ternary complex, with MukE and MukB via its C-terminal region. The complex formation is stimulated by calcium or magnesium. It is required for an interaction between MukE and MukB.

It is found in the cytoplasm. The protein resides in the nucleoid. Involved in chromosome condensation, segregation and cell cycle progression. May participate in facilitating chromosome segregation by condensation DNA from both sides of a centrally located replisome during cell division. Not required for mini-F plasmid partitioning. Probably acts via its interaction with MukB and MukE. Overexpression results in anucleate cells. It has a calcium binding activity. The chain is Chromosome partition protein MukF from Mannheimia succiniciproducens (strain KCTC 0769BP / MBEL55E).